The following is a 144-amino-acid chain: Large ribosomal subunit protein uL16 (144 aa).

This sequence belongs to the universal ribosomal protein uL16 family. In terms of assembly, part of the 50S ribosomal subunit.

Functionally, binds 23S rRNA and is also seen to make contacts with the A and possibly P site tRNAs. In Bacillus anthracis (strain A0248), this protein is Large ribosomal subunit protein uL16.